Here is a 501-residue protein sequence, read N- to C-terminus: Glycerol kinase (501 aa).

Thr-16 serves as a coordination point for ADP. Thr-16, Thr-17, and Ser-18 together coordinate ATP. Thr-16 provides a ligand contact to sn-glycerol 3-phosphate. An ADP-binding site is contributed by Arg-20. Sn-glycerol 3-phosphate-binding residues include Arg-84, Glu-85, Tyr-135, and Asp-242. Arg-84, Glu-85, Tyr-135, Asp-242, and Gln-243 together coordinate glycerol. Residues Thr-264 and Gly-307 each coordinate ADP. ATP contacts are provided by Thr-264, Gly-307, Gln-311, and Gly-408. An ADP-binding site is contributed by Gly-408.

It belongs to the FGGY kinase family.

It carries out the reaction glycerol + ATP = sn-glycerol 3-phosphate + ADP + H(+). Its pathway is polyol metabolism; glycerol degradation via glycerol kinase pathway; sn-glycerol 3-phosphate from glycerol: step 1/1. In terms of biological role, key enzyme in the regulation of glycerol uptake and metabolism. Catalyzes the phosphorylation of glycerol to yield sn-glycerol 3-phosphate. The protein is Glycerol kinase of Saccharolobus islandicus (strain M.14.25 / Kamchatka #1) (Sulfolobus islandicus).